The following is a 1358-amino-acid chain: Indole-3-acetaldehyde oxidase (1358 aa).

One can recognise a 2Fe-2S ferredoxin-type domain in the interval 11 to 98 (STVVLAVNGK…RCSVTTSEGI (88 aa)). 3 residues coordinate [2Fe-2S] cluster: cysteine 50, cysteine 55, and cysteine 58. In terms of domain architecture, FAD-binding PCMH-type spans 241 to 419 (IAASGDGWYH…LSIFIPEWGS (179 aa)). The interval 532-559 (SSAPSNIDTPNGSYTHETGSNVDSPERH) is disordered. Residues 537–554 (NIDTPNGSYTHETGSNVD) are compositionally biased toward polar residues.

It belongs to the xanthine dehydrogenase family. Aldehyde oxidases (AO) are homodimers and heterodimers of AO subunits. Requires [2Fe-2S] cluster as cofactor. It depends on FAD as a cofactor. Mo-molybdopterin serves as cofactor. As to expression, mostly expressed in roots, and, to a lower extent, in mesocotyl, leaves and coleoptile. Accumulates in apical region of maize coleoptiles (at protein level).

The protein localises to the cytoplasm. It carries out the reaction indole-3-acetaldehyde + O2 + H2O = (indol-3-yl)acetate + H2O2 + H(+). Its activity is regulated as follows. Inhibited by 2-mercaptoethanol, p-chloromercuribenzoate, and iodoacetate. In terms of biological role, in higher plants aldehyde oxidases (AO) appear to be homo- and heterodimeric assemblies of AO subunits with probably different physiological functions. Involved in the biosynthesis of auxin from (indol-3-yl)acetaldehyde. Can also use indole-3-aldehyde and benzaldehyde as substrate. The polypeptide is Indole-3-acetaldehyde oxidase (AO1) (Zea mays (Maize)).